Here is a 162-residue protein sequence, read N- to C-terminus: 2-C-methyl-D-erythritol 2,4-cyclodiphosphate synthase (162 aa).

D10 and H12 together coordinate a divalent metal cation. 4-CDP-2-C-methyl-D-erythritol 2-phosphate is bound by residues 10-12 (DVH) and 36-37 (HS). H44 lines the a divalent metal cation pocket. Residues 58-60 (DIG), 63-67 (FSDTD), and R144 each bind 4-CDP-2-C-methyl-D-erythritol 2-phosphate.

It belongs to the IspF family. In terms of assembly, homotrimer. Requires a divalent metal cation as cofactor.

It catalyses the reaction 4-CDP-2-C-methyl-D-erythritol 2-phosphate = 2-C-methyl-D-erythritol 2,4-cyclic diphosphate + CMP. Its pathway is isoprenoid biosynthesis; isopentenyl diphosphate biosynthesis via DXP pathway; isopentenyl diphosphate from 1-deoxy-D-xylulose 5-phosphate: step 4/6. Involved in the biosynthesis of isopentenyl diphosphate (IPP) and dimethylallyl diphosphate (DMAPP), two major building blocks of isoprenoid compounds. Catalyzes the conversion of 4-diphosphocytidyl-2-C-methyl-D-erythritol 2-phosphate (CDP-ME2P) to 2-C-methyl-D-erythritol 2,4-cyclodiphosphate (ME-CPP) with a corresponding release of cytidine 5-monophosphate (CMP). This chain is 2-C-methyl-D-erythritol 2,4-cyclodiphosphate synthase, found in Burkholderia thailandensis (strain ATCC 700388 / DSM 13276 / CCUG 48851 / CIP 106301 / E264).